The primary structure comprises 30 residues: Cycloviolacin-O5 (30 aa).

A cross-link (cyclopeptide (Gly-Asn)) is located at residues 1 to 30 (GTPCGESCVWIPCISSAVGCSCKNKVCYKN). Cystine bridges form between Cys-4-Cys-20, Cys-8-Cys-22, and Cys-13-Cys-27.

This is a cyclic peptide.

Its function is as follows. Probably participates in a plant defense mechanism. The polypeptide is Cycloviolacin-O5 (Viola odorata (Sweet violet)).